A 60-amino-acid polypeptide reads, in one-letter code: DNA-binding protein 7c (60 aa).

The tract at residues 37–60 (DNGKTGRGAVSEKDAPKELLEKLK) is disordered. Residues 46 to 60 (VSEKDAPKELLEKLK) show a composition bias toward basic and acidic residues.

Belongs to the 7 kDa DNA-binding/endoribonuclease P2 family. Monomer.

The protein localises to the cytoplasm. Can constrain negative DNA supercoils. May be involved in maintaining the integrity of the genome at high temperature. The polypeptide is DNA-binding protein 7c (Acidianus hospitalis (strain W1)).